The primary structure comprises 350 residues: Biotin synthase (350 aa).

Residues 63 to 281 (GDIELATLLS…IAVARITMPK (219 aa)) enclose the Radical SAM core domain. Residues Cys78, Cys82, and Cys85 each contribute to the [4Fe-4S] cluster site. [2Fe-2S] cluster is bound by residues Cys122, Cys153, Cys213, and Arg285.

It belongs to the radical SAM superfamily. Biotin synthase family. Homodimer. Requires [4Fe-4S] cluster as cofactor. It depends on [2Fe-2S] cluster as a cofactor.

The enzyme catalyses (4R,5S)-dethiobiotin + (sulfur carrier)-SH + 2 reduced [2Fe-2S]-[ferredoxin] + 2 S-adenosyl-L-methionine = (sulfur carrier)-H + biotin + 2 5'-deoxyadenosine + 2 L-methionine + 2 oxidized [2Fe-2S]-[ferredoxin]. It functions in the pathway cofactor biosynthesis; biotin biosynthesis; biotin from 7,8-diaminononanoate: step 2/2. Catalyzes the conversion of dethiobiotin (DTB) to biotin by the insertion of a sulfur atom into dethiobiotin via a radical-based mechanism. In Acidovorax sp. (strain JS42), this protein is Biotin synthase.